We begin with the raw amino-acid sequence, 93 residues long: Protein LSO1 (93 aa).

Residues 1–73 form a disordered region; it reads MHNTGKRYSE…TEKLRAKKER (73 aa). The stretch at 20–83 forms a coiled coil; that stretch reads ARKRRQAYEK…DQLLAAEEEA (64 aa). Basic and acidic residues-rich tracts occupy residues 25–49 and 57–73; these read QAYEKDQLEKQQLEAQEAQRWEEGA and LIMEQKKTEKLRAKKER.

The protein localises to the nucleus. It is found in the cytoplasm. Its function is as follows. Likely to play a role in iron homeostasis. The sequence is that of Protein LSO1 from Saccharomyces cerevisiae (strain ATCC 204508 / S288c) (Baker's yeast).